A 550-amino-acid polypeptide reads, in one-letter code: Acyl-CoA-dependent acyltransferase MAC2 (550 aa).

The protein belongs to the trichothecene O-acetyltransferase family.

Its pathway is secondary metabolite biosynthesis. Functionally, acyl-CoA-dependent acyltransferase; part of the gene cluster that mediates the biosynthesis of mannosylerythritol lipids (MELs), surface-active substances that enhance the availability of water-insoluble substrates. Depending on the number of acetyl groups, mannosylerythritol lipids can be differentiated into MEL A (fully acetylated), MEL B and MEL C (monoacetylated at R-6 and R-4, respectively), and the fully deacetylated MEL D. The first step in the pathway is the generation of mannosylerythritol by the glycosyltransferase EMT1 which catalyzes the transfer of GDP-mannose to the C-4 atom of meso-erythritol. This reaction has to be stereospecific, since only mannosyl-D-erythritol is generated. The produced disaccharide is subsequently acylated with fatty acids of various lengths by the acyltransferases MAC1 and MAC2 at positions C-2 and C-3, repectively. The existence of MEL derivatives which carry an acetyl group at C-2 implies that at least MAC1 also accepts acetyl-CoA as a donor. The final step of MEL biosynthesis is the acetylation of the fully acylated mannosylerythritol lipids catalyzed by the acetyl-CoA-dependent acetyltransferase MAT1. MAT1 displays a relaxed regioselectivity and is able to transfer acetylgroups to both positions C-4 and C-6 of the mannosyl moiety. The polypeptide is Acyl-CoA-dependent acyltransferase MAC2 (Pseudozyma antarctica (strain T-34) (Yeast)).